A 539-amino-acid polypeptide reads, in one-letter code: O-phosphoserine--tRNA(Cys) ligase (539 aa).

Substrate-binding positions include 188 to 190 (HMT), 233 to 235 (SAS), 275 to 276 (YY), and N327.

It belongs to the class-II aminoacyl-tRNA synthetase family. O-phosphoseryl-tRNA(Cys) synthetase subfamily. Homotetramer. Interacts with SepCysS.

The catalysed reaction is tRNA(Cys) + O-phospho-L-serine + ATP = O-phospho-L-seryl-tRNA(Cys) + AMP + diphosphate. In terms of biological role, catalyzes the attachment of O-phosphoserine (Sep) to tRNA(Cys). This chain is O-phosphoserine--tRNA(Cys) ligase, found in Methanococcoides burtonii (strain DSM 6242 / NBRC 107633 / OCM 468 / ACE-M).